Here is a 232-residue protein sequence, read N- to C-terminus: 7-cyano-7-deazaguanine synthase (232 aa).

Residue F8 to L18 coordinates ATP. 4 residues coordinate Zn(2+): C187, C196, C199, and C202.

It belongs to the QueC family. It depends on Zn(2+) as a cofactor.

The enzyme catalyses 7-carboxy-7-deazaguanine + NH4(+) + ATP = 7-cyano-7-deazaguanine + ADP + phosphate + H2O + H(+). It functions in the pathway purine metabolism; 7-cyano-7-deazaguanine biosynthesis. Catalyzes the ATP-dependent conversion of 7-carboxy-7-deazaguanine (CDG) to 7-cyano-7-deazaguanine (preQ(0)). The sequence is that of 7-cyano-7-deazaguanine synthase from Vibrio vulnificus (strain YJ016).